The sequence spans 207 residues: MKFKDKLKFYVITDSNYSDEVSSVEKALKGGASSIQLRMKTSSTRKMIEVGNKLRTLTSEYDALFFVNDRLDVAQAVNADGIHVGIDDMPVSKIKEIAPNLIIGASAYNIDEMKTAEYEGADYLGVGAVYSTNTKLDARNLGLDGLKDISKIANLPIVAIGGINHSNVENVLECGVSGVAVVSAIVGAENILKSAENMHELIKKYIK.

4-amino-2-methyl-5-(diphosphooxymethyl)pyrimidine-binding positions include 36-40 (QLRMK) and N68. Mg(2+) is bound by residues D69 and D88. S106 is a 4-amino-2-methyl-5-(diphosphooxymethyl)pyrimidine binding site. 132 to 134 (TNT) provides a ligand contact to 2-[(2R,5Z)-2-carboxy-4-methylthiazol-5(2H)-ylidene]ethyl phosphate. A 4-amino-2-methyl-5-(diphosphooxymethyl)pyrimidine-binding site is contributed by K135. 2-[(2R,5Z)-2-carboxy-4-methylthiazol-5(2H)-ylidene]ethyl phosphate-binding positions include G162 and 182-183 (VS).

This sequence belongs to the thiamine-phosphate synthase family. The cofactor is Mg(2+).

It carries out the reaction 2-[(2R,5Z)-2-carboxy-4-methylthiazol-5(2H)-ylidene]ethyl phosphate + 4-amino-2-methyl-5-(diphosphooxymethyl)pyrimidine + 2 H(+) = thiamine phosphate + CO2 + diphosphate. The enzyme catalyses 2-(2-carboxy-4-methylthiazol-5-yl)ethyl phosphate + 4-amino-2-methyl-5-(diphosphooxymethyl)pyrimidine + 2 H(+) = thiamine phosphate + CO2 + diphosphate. The catalysed reaction is 4-methyl-5-(2-phosphooxyethyl)-thiazole + 4-amino-2-methyl-5-(diphosphooxymethyl)pyrimidine + H(+) = thiamine phosphate + diphosphate. It functions in the pathway cofactor biosynthesis; thiamine diphosphate biosynthesis; thiamine phosphate from 4-amino-2-methyl-5-diphosphomethylpyrimidine and 4-methyl-5-(2-phosphoethyl)-thiazole: step 1/1. Condenses 4-methyl-5-(beta-hydroxyethyl)thiazole monophosphate (THZ-P) and 2-methyl-4-amino-5-hydroxymethyl pyrimidine pyrophosphate (HMP-PP) to form thiamine monophosphate (TMP). The sequence is that of Thiamine-phosphate synthase from Methanococcus maripaludis (strain C5 / ATCC BAA-1333).